The chain runs to 1749 residues: Kinesin-like protein KIF13A (1749 aa).

Residues 5–352 (KVKVAVRVRP…LRYADRAKRI (348 aa)) form the Kinesin motor domain. 102–109 (GQTGSGKS) is an ATP binding site. The stretch at 359–431 (NEDPNAKVIR…QERQRQLESM (73 aa)) forms a coiled coil. Residues 469 to 519 (HTRVGADTSQDIQLFGIGIQPEHCEIDIAADGDITLTPKENARSCVNGTLV) enclose the FHA domain. Positions 552–775 (LKDFERETSS…VPEAKRLYGK (224 aa)) form a coiled coil. Disordered regions lie at residues 633–652 (QQLS…LAYS) and 834–853 (IPER…SGSL). Serine 636 is subject to Phosphoserine. A coiled-coil region spans residues 1086 to 1126 (SDALIKRREYLDEQIKKVSNKKEKTEDDMEREARLVEQWVG). The residue at position 1274 (serine 1274) is a Phosphoserine. Over residues 1370–1383 (LSTPNVHNVSSSRP) the composition is skewed to polar residues. 2 disordered regions span residues 1370 to 1402 (LSTP…QLDV) and 1417 to 1436 (TLPR…ENPH). Positions 1421–1430 (DSPRRSKEGC) are enriched in basic and acidic residues. Residues serine 1441, serine 1477, serine 1481, serine 1524, serine 1600, and serine 1650 each carry the phosphoserine modification. Residues 1475–1499 (LLSQEDSEEEENELEALSRKLMLTQ) adopt a coiled-coil conformation. Disordered regions lie at residues 1584–1665 (CAEP…GHQA) and 1698–1749 (DFDG…TATR). Residues 1719-1741 (ETDHKGIPERPPDADRLHPKIEN) show a composition bias toward basic and acidic residues.

The protein belongs to the TRAFAC class myosin-kinesin ATPase superfamily. Kinesin family. In terms of assembly, interacts with AP1G1 and AP1G2. Interacts with ZFYVE26. Interacts with AP2B1.

It is found in the golgi apparatus membrane. It localises to the cytoplasm. Its subcellular location is the cytoskeleton. The protein resides in the microtubule organizing center. The protein localises to the centrosome. It is found in the midbody. It localises to the endosome membrane. In terms of biological role, plus end-directed microtubule-dependent motor protein involved in intracellular transport and regulating various processes such as mannose-6-phosphate receptor (M6PR) transport to the plasma membrane, endosomal sorting during melanosome biogenesis and cytokinesis. During melanosome maturation, required for delivering melanogenic enzymes from recycling endosomes to nascent melanosomes by creating peripheral recycling endosomal subdomains in melanocytes. Also required for the abscission step in cytokinesis: mediates translocation of ZFYVE26, and possibly TTC19, to the midbody during cytokinesis. Mediates the transport of M6PR-containing vesicles from trans-Golgi network to the plasma membrane via direct interaction with the AP-1 complex. The polypeptide is Kinesin-like protein KIF13A (Kif13a) (Mus musculus (Mouse)).